We begin with the raw amino-acid sequence, 201 residues long: Segregation and condensation protein B (201 aa).

It belongs to the ScpB family. In terms of assembly, homodimer. Homodimerization may be required to stabilize the binding of ScpA to the Smc head domains. Component of a cohesin-like complex composed of ScpA, ScpB and the Smc homodimer, in which ScpA and ScpB bind to the head domain of Smc. The presence of the three proteins is required for the association of the complex with DNA.

Its subcellular location is the cytoplasm. In terms of biological role, participates in chromosomal partition during cell division. May act via the formation of a condensin-like complex containing Smc and ScpA that pull DNA away from mid-cell into both cell halves. The polypeptide is Segregation and condensation protein B (Enterococcus faecalis (strain ATCC 700802 / V583)).